A 492-amino-acid polypeptide reads, in one-letter code: Cysteine--tRNA ligase (492 aa).

Cys-31 is a binding site for Zn(2+). Positions 33 to 43 match the 'HIGH' region motif; that stretch reads PTVYGDPHLGH. Zn(2+) is bound by residues Cys-226, His-251, and Glu-255. Residues 283-287 carry the 'KMSKS' region motif; that stretch reads KMGKS. Lys-286 serves as a coordination point for ATP.

It belongs to the class-I aminoacyl-tRNA synthetase family. As to quaternary structure, monomer. It depends on Zn(2+) as a cofactor.

It is found in the cytoplasm. The enzyme catalyses tRNA(Cys) + L-cysteine + ATP = L-cysteinyl-tRNA(Cys) + AMP + diphosphate. The chain is Cysteine--tRNA ligase from Azobacteroides pseudotrichonymphae genomovar. CFP2.